Reading from the N-terminus, the 504-residue chain is Aromatic and large neutral amino acid transporter 5-3 (504 aa).

The disordered stretch occupies residues 1–24 (MESTEATMVERKAESPSSGDRARS). Basic and acidic residues predominate over residues 8–24 (MVERKAESPSSGDRARS). The next 6 membrane-spanning stretches (helical) occupy residues 76 to 96 (YVVL…FMNW), 138 to 158 (HLFT…GIML), 165 to 185 (FGAL…GFSS), 206 to 226 (FFPC…IIAV), 233 to 253 (ISFI…GATF), and 256 to 276 (VMLG…LFII). Asn310 carries an N-linked (GlcNAc...) asparagine glycan. 6 helical membrane-spanning segments follow: residues 324-344 (LSFL…LFFA), 356-376 (EANQ…GGIA), 381-401 (IVPV…LMLI), 406-426 (CFAA…SFLV), 436-456 (IFYP…GGII), and 475-495 (MTVL…FMYV).

The protein belongs to the SLC43A transporter (TC 2.A.1.44) family.

The protein localises to the cell membrane. It catalyses the reaction L-tyrosine(in) = L-tyrosine(out). Its activity is regulated as follows. L-tyrosine uptake is stimulated in trans by aromatic and large neutral amino acids, but not smaller or charged amino acids. Functionally, L-tyrosine transporter that is essential for parasite survival and virulence. May also act as an aromatic and large neutral amino acid transporter. Does not cotransport other charged ions. Involved in amino acid homeostasis by facilitating the net uptake of L-tyrosine and maintaining intracellular pools of aromatic and large neutral amino acids through exchange. This is Aromatic and large neutral amino acid transporter 5-3 from Toxoplasma gondii.